The following is a 170-amino-acid chain: Protein SprT (170 aa).

A SprT-like domain is found at 22 to 163 (LQQANLTLQT…RCRRCGKTLR (142 aa)). H78 contacts Zn(2+). E79 is a catalytic residue. Residue H82 coordinates Zn(2+).

Belongs to the SprT family. Zn(2+) serves as cofactor.

It localises to the cytoplasm. This is Protein SprT from Pectobacterium carotovorum subsp. carotovorum (strain PC1).